The chain runs to 1375 residues: MDSSPNKKTYRYPRRSLSLHARDRVSEARKLEELNLNDGLVAAGLQLVGVALEKQGTGSHIYMKQKNFSANDVSSSPMVSEEVNGSEMDFNPKCMPQDASLVERMFDELLKDGTFFWGAAYKNLQNISLRRKWLLICKIRSSNHWGKKKVTSSTTYSTHLATNELAENAHFLDGLVRNLSTGGMKLSKALYKLEKFLRKQSFLQLFLKDEIYLTTLIEKTLPLISKELQFVYLRCFKILMNNPLARIRALHSEPLIRWFTELLTDQNSNLKCQLLSMELLLLLTYVEGSTGCELIWDQLSILFTDWLEWFDKILADDIAIHSSLYLNWNQLKIDYSTTFLLLINSILQGFNNKTALEILNFLKKNNIHNTITFLELAYKDDPNSVVIMEQIKQFKSKESAIFDSMIKTTNDTNSLHPTKDIARIESEPLCLENCLLLKAKDSPVEAPINEIIQSLWKILDSQKPYSESIKLLKLINSLLFYLIDSFQVSTNPSFDETLESAENVDYVFQDSVNKLLDSLQSDEIARRAVTEIDDLNAKISHLNEKLNLVENHDKDHLIAKLDESESLISLKTKEIENLKLQLKATKKRLDQITTHQRLYDQPPSLASSNLSIAGSIIKNNSHGNIIFQNLAKKQQQQQKISLPKRSTSLLKSKRVTSLSSYLTDANNENESQNESEDKSKDSLFQRSTSTINFNIPSMKNITNMQNVSLNSILSELEFSNSLGTQPNYQSSPVLSSVSSSPKLFPRLSSDSLDNGIQLVPEVVKLPQLPPPPPPPPPPPLPQSLLTEAEAKPDGVSCIAAPAPPPLPDLFKTKTCGAVPPPPPPPPLPESLSMNKGPSNHDLVTPPAPPLPNGLLSSSSVSINPTTTDLKPPPTEKRLKQIHWDKVEDIKDTLWEDTFQRQETIKELQTDGIFSQIEDIFKMKSPTKIANKRNAESSIALSSNNGKSSNELKKISFLSRDLAQQFGINLHMFSQLSDMEFVMKVLNCDNDIVQNVNILKFFCKEELVNIPKSMLNKYEPYSQGKDGKAVSDLQRADRIFLELCINLRFYWNARSKSLLTLSTYERDYYDLIFKLQKIDDAISHLNRSPKFKSLMFIITEIGNHMNKRIVKGIKLKSLTKLAFVRSSIDQNVSFLHFIEKVIRIKYPDIYGFVDDLKNIEDLGKISLEHVESECHEFHKKIEDLVTQFQVGKLSKEENLDPRDQIIKKVKFKINRAKTKSELLIGQCKLTLIDLNKLMKYYGEDPKDKESKNEFFQPFIEFLAMFKKCAKENIEKEEMERVYEQRKSLLDMRTSSNKKSNGSDENDGEKVNRDAVDLLISKLREVKKDPEPLRRRKSTKLNEIAINVHEGDVKTRKDEDHVLLERTHAMLNDIQNI.

The GBD/FH3 domain occupies 94 to 490 (CMPQDASLVE…YLIDSFQVST (397 aa)). The stretch at 520–601 (QSDEIARRAV…ITTHQRLYDQ (82 aa)) forms a coiled coil. The residue at position 621 (serine 621) is a Phosphoserine. An FH1 domain is found at 659–851 (SSYLTDANNE…LVTPPAPPLP (193 aa)). Residues 661–684 (YLTDANNENESQNESEDKSKDSLF) form a disordered region. Serine 751 carries the post-translational modification Phosphoserine. Disordered regions lie at residues 764–785 (KLPQ…QSLL), 817–839 (AVPP…GPSN), and 1285–1309 (KSLL…GEKV). Composition is skewed to pro residues over residues 767 to 781 (QLPP…PPLP) and 818 to 828 (VPPPPPPPPLP). The region spanning 868–1290 (DLKPPPTEKR…YEQRKSLLDM (423 aa)) is the FH2 domain. The DAD domain occupies 1302 to 1336 (DENDGEKVNRDAVDLLISKLREVKKDPEPLRRRKS).

It belongs to the formin homology family. BNI1 subfamily. In terms of assembly, interacts with profilin at the FH1 domain.

Its function is as follows. May organize microtubules by mediating spindle positioning and movement in the budding process. Potential target of the RHO family members. This Saccharomyces cerevisiae (strain ATCC 204508 / S288c) (Baker's yeast) protein is BNI1-related protein 1 (BNR1).